Here is a 438-residue protein sequence, read N- to C-terminus: Putative permease HI_0125 (438 aa).

13 consecutive transmembrane segments (helical) span residues 21–41 (IIAG…VPNM), 51–71 (SVFI…GLWA), 73–93 (APMA…SLVI), 97–117 (VAIP…TLIS), 137–157 (AGIG…GLVV), 167–187 (LGDF…LIIG), 195–215 (GGIL…DPNV), 238–258 (FMGA…MTAV), 296–316 (LFSG…AAGT), 326–346 (AIVV…AFLV), 347–367 (PGYA…SNVS), 386–406 (FIVL…ALVI), and 418–438 (NVGT…GWAI). 315-322 (GTAAGGKT) provides a ligand contact to ATP.

It belongs to the nucleobase:cation symporter-2 (NCS2) (TC 2.A.40) family. Azg-like subfamily.

It is found in the cell membrane. This is Putative permease HI_0125 from Haemophilus influenzae (strain ATCC 51907 / DSM 11121 / KW20 / Rd).